A 475-amino-acid chain; its full sequence is MWHAISRTSRMSQSGCPSGLLADKNISSSATRVIVKTAGNQKDFMVADDISVRQFKEMLLAHFQCQMDQLVLVFMGCLLKDHDTLSQRGIMDGHTIYLVIKSKQGSRSLAHSFRDLPTNDPCHRDRNTKGNSSRVHQPTGMNQAPVELAHFVGSDAPKVHTQNLEVSHPECKAQMLENPSIQRLLSNMEFMWQFISEHLDTQQLMQQNPEVSRLLLDNSEILLQTLELARNLAMIQEIMQIQQPSQNLEYPLNPQPYLGLETMPGGNNALGQNYADINDQMLNSMQDPFGGNPFTALLAGQVLEQVQSSPPPPPPSQEQQDQLTQHPATRVIYNSSGGFSSNTSANDTLNKVNHTSKANTAMISTKGQSHICATRQPAWIPALPSIELTQQLQEEYKDATVSLSSSRQTLKGDLQLSDEQSSSQITGGMMQLLMNNPYLAAQIMLFTSMPQLSEQWRQQLPTFLQQTQISDLLSA.

A Ubiquitin-like domain is found at 31–105; the sequence is TRVIVKTAGN…IYLVIKSKQG (75 aa). 2 disordered regions span residues 113-138 and 305-325; these read FRDLPTNDPCHRDRNTKGNSSRVHQP and QVQSSPPPPPPSQEQQDQLTQ. The segment covering 129–138 has biased composition (polar residues); sequence KGNSSRVHQP.

This is Ubiquilin-like protein (UBQLNL) from Homo sapiens (Human).